We begin with the raw amino-acid sequence, 124 residues long: Desulfoferrodoxin homolog (124 aa).

The Fe cation site is built by C10, C13, C29, C30, H49, H69, H75, C117, and H120.

Belongs to the desulfoferrodoxin family. The cofactor is Fe(3+). Cu(2+) is required as a cofactor.

In Methanothermobacter thermautotrophicus (strain ATCC 29096 / DSM 1053 / JCM 10044 / NBRC 100330 / Delta H) (Methanobacterium thermoautotrophicum), this protein is Desulfoferrodoxin homolog.